The sequence spans 294 residues: Chelated iron transport system membrane protein YfeC (294 aa).

8 consecutive transmembrane segments (helical) span residues 17–37, 51–71, 93–113, 140–160, 169–189, 194–214, 221–241, and 246–266; these read AIWV…YLML, VVPG…GAFF, AIIG…VSLN, IIIL…LAVF, IGLS…ACTV, TVGA…AYLL, LLII…YLSF, and ATGG…FFFA.

This sequence belongs to the ABC-3 integral membrane protein family.

It is found in the cell inner membrane. Part of an ATP-driven transport system YfeABC for chelated iron. The sequence is that of Chelated iron transport system membrane protein YfeC (yfeC) from Yersinia pestis.